The chain runs to 387 residues: Phosphoglycerate kinase (387 aa).

Substrate contacts are provided by residues 21 to 23 (DLN), Arg-36, 59 to 62 (HLGR), Arg-113, and Arg-146. Residues Lys-197, Glu-314, and 340–343 (GGDT) contribute to the ATP site.

Belongs to the phosphoglycerate kinase family. Monomer.

The protein resides in the cytoplasm. The enzyme catalyses (2R)-3-phosphoglycerate + ATP = (2R)-3-phospho-glyceroyl phosphate + ADP. Its pathway is carbohydrate degradation; glycolysis; pyruvate from D-glyceraldehyde 3-phosphate: step 2/5. This chain is Phosphoglycerate kinase, found in Aliivibrio fischeri (strain MJ11) (Vibrio fischeri).